The chain runs to 329 residues: Myoblast determination protein 1 homolog (329 aa).

A bHLH domain is found at 160–211 (DRRKAATMRERRRLRKVNEAFEVVKQRTCPNPNQRLPKVEILRSAIDYINTL). The interval 256–279 (NPDGPNVYDDEDLSDTDEDRDHHH) is disordered. A compositionally biased stretch (acidic residues) spans 263 to 273 (YDDEDLSDTDE).

In terms of assembly, efficient DNA binding requires dimerization with another bHLH protein. As to expression, body wall muscle cells; in clonal muscle precursors, in a set of early embryonic blastomeres (the ms-granddaughters), and in six glial-like cells called GLRS.

It is found in the nucleus. Its function is as follows. Accumulation defines the body wall muscle cell fate during embryogenesis. This chain is Myoblast determination protein 1 homolog (hlh-1), found in Caenorhabditis briggsae.